Reading from the N-terminus, the 202-residue chain is LexA repressor (202 aa).

Positions 28-48 form a DNA-binding region, H-T-H motif; that stretch reads RAEIAQRLGFRSPNAAEEHLK. Residues S119 and K156 each act as for autocatalytic cleavage activity in the active site.

It belongs to the peptidase S24 family. In terms of assembly, homodimer.

It carries out the reaction Hydrolysis of Ala-|-Gly bond in repressor LexA.. Represses a number of genes involved in the response to DNA damage (SOS response), including recA and lexA. Binds to the 16 bp palindromic sequence 5'-CTGTATATATATACAG-3'. In the presence of single-stranded DNA, RecA interacts with LexA causing an autocatalytic cleavage which disrupts the DNA-binding part of LexA, leading to derepression of the SOS regulon and eventually DNA repair. In Escherichia coli (strain K12 / MC4100 / BW2952), this protein is LexA repressor.